A 348-amino-acid polypeptide reads, in one-letter code: UDP-N-acetyl-alpha-D-glucosaminouronate 4-epimerase (348 aa).

NAD(+)-binding residues include phenylalanine 26, isoleucine 27, aspartate 46, threonine 50, glycine 51, aspartate 77, isoleucine 78, glutamine 97, tyrosine 165, lysine 169, and valine 195. Tyrosine 165 acts as the Proton acceptor in catalysis.

This sequence belongs to the NAD(P)-dependent epimerase/dehydratase family. As to quaternary structure, homodimer. NAD(+) serves as cofactor.

The catalysed reaction is UDP-2-acetamido-2-deoxy-alpha-D-glucuronate = UDP-2-acetamido-2-deoxy-alpha-D-galacturonate. It catalyses the reaction UDP-N-acetyl-alpha-D-glucosamine = UDP-N-acetyl-alpha-D-galactosamine. It participates in capsule biogenesis; capsule polysaccharide biosynthesis. The protein operates within glycan metabolism; Vi-antigen biosynthesis. Functionally, epimerase required for the biosynthesis of the capsular polysaccharide, commonly referred as the Vi antigen, an important virulence factor. Catalyzes the reversible epimerization of UDP-N-acetylglucosaminuronic acid (UDP-GlcNAcA) to UDP-N-acetylgalactosaminuronic acid (UDP-GalNAcA). Also catalyzes, with lower efficiency, the reversible epimerization of UDP-N-acetylglucosamine (UDP-GlcNAc) to UDP-N-acetylgalactosamine (UDP-GalNAc). Cannot use UDP-glucose (UDP-Glc) and UDP-galactose (UDP-Gal) as substrates. This is UDP-N-acetyl-alpha-D-glucosaminouronate 4-epimerase from Salmonella typhi.